We begin with the raw amino-acid sequence, 276 residues long: Dermonecrotic toxin LsaSicTox-alphaIB2iii (276 aa).

Histidine 5 is an active-site residue. Positions 25 and 27 each coordinate Mg(2+). The active-site Nucleophile is histidine 41. 2 cysteine pairs are disulfide-bonded: cysteine 45-cysteine 51 and cysteine 47-cysteine 190. Mg(2+) is bound at residue aspartate 85. Asparagine 129 and asparagine 253 each carry an N-linked (GlcNAc...) asparagine glycan.

The protein belongs to the arthropod phospholipase D family. Class II subfamily. Mg(2+) is required as a cofactor. Expressed by the venom gland.

Its subcellular location is the secreted. The enzyme catalyses an N-(acyl)-sphingosylphosphocholine = an N-(acyl)-sphingosyl-1,3-cyclic phosphate + choline. It carries out the reaction an N-(acyl)-sphingosylphosphoethanolamine = an N-(acyl)-sphingosyl-1,3-cyclic phosphate + ethanolamine. The catalysed reaction is a 1-acyl-sn-glycero-3-phosphocholine = a 1-acyl-sn-glycero-2,3-cyclic phosphate + choline. It catalyses the reaction a 1-acyl-sn-glycero-3-phosphoethanolamine = a 1-acyl-sn-glycero-2,3-cyclic phosphate + ethanolamine. Functionally, dermonecrotic toxins cleave the phosphodiester linkage between the phosphate and headgroup of certain phospholipids (sphingolipid and lysolipid substrates), forming an alcohol (often choline) and a cyclic phosphate. This toxin acts on sphingomyelin (SM). It may also act on ceramide phosphoethanolamine (CPE), lysophosphatidylcholine (LPC) and lysophosphatidylethanolamine (LPE), but not on lysophosphatidylserine (LPS), and lysophosphatidylglycerol (LPG). It acts by transphosphatidylation, releasing exclusively cyclic phosphate products as second products. Induces dermonecrosis, hemolysis, increased vascular permeability, edema, inflammatory response, and platelet aggregation. The sequence is that of Dermonecrotic toxin LsaSicTox-alphaIB2iii from Loxosceles sabina (Tucson recluse spider).